A 407-amino-acid polypeptide reads, in one-letter code: Peptidase T (407 aa).

His77 provides a ligand contact to Zn(2+). Asp79 is a catalytic residue. Asp138 contacts Zn(2+). Glu172 serves as the catalytic Proton acceptor. Glu173, Asp195, and His377 together coordinate Zn(2+).

It belongs to the peptidase M20B family. It depends on Zn(2+) as a cofactor.

It is found in the cytoplasm. The catalysed reaction is Release of the N-terminal residue from a tripeptide.. Cleaves the N-terminal amino acid of tripeptides. This chain is Peptidase T, found in Aeromonas salmonicida (strain A449).